A 399-amino-acid polypeptide reads, in one-letter code: Rhodopsin, G0-coupled (399 aa).

Residues 1-17 are Extracellular-facing; it reads MPFPLNRTDTALVISPS. Residue N6 is glycosylated (N-linked (GlcNAc...) asparagine). Residues 18 to 43 traverse the membrane as a helical segment; the sequence is EFRIIGIFISICCIIGVLGNLLIIIV. At 44–55 the chain is on the cytoplasmic side; that stretch reads FAKRRSVRRPIN. A helical transmembrane segment spans residues 56 to 81; it reads FFVLNLAVSDLIVALLGYPMTAASAF. Residues 82–95 are Extracellular-facing; the sequence is SNRWIFDNIGCKIY. An intrachain disulfide couples C92 to C169. Residues 96–115 traverse the membrane as a helical segment; sequence AFLCFNSGVISIMTHAALSF. Residues 116 to 134 are Cytoplasmic-facing; it reads CRYIIICQYGYRKKITQTT. The chain crosses the membrane as a helical span at residues 135–158; it reads VLRTLFSIWSFAMFWTLSPLFGWS. Residues 159–182 lie on the Extracellular side of the membrane; sequence SYVIEVVPVSCSVNWYGHGLGDVS. The helical transmembrane segment at 183–210 threads the bilayer; that stretch reads YTISVIVAVYVFPLSIIVFSYGMILQEK. At 211-240 the chain is on the cytoplasmic side; that stretch reads VCKDSRKNGIRAQQRYTPRFIQDIEQRVTF. Residues 241–263 form a helical membrane-spanning segment; the sequence is ISFLMMAAFMVAWTPYAIMSALA. Residues 264-271 are Extracellular-facing; the sequence is IGSFNVEN. The chain crosses the membrane as a helical span at residues 272 to 295; sequence SFAALPTLFAKASCAYNPFIYAFT. At K282 the chain carries N6-(retinylidene)lysine. The Cytoplasmic portion of the chain corresponds to 296 to 399; sequence NANFRDTVVE…NTFTADFSVI (104 aa).

The protein belongs to the G-protein coupled receptor 1 family. Opsin subfamily. In terms of processing, phosphorylated on some or all of the serine and threonine residues present in the C-terminal region. In terms of tissue distribution, retina. Expressed in the hyperpolarizing cell layer of the photoreceptor cells with its photoreceptive region adjacent to the lens.

It is found in the membrane. Functionally, visual pigments are the light-absorbing molecules that mediate vision. They consist of an apoprotein, opsin, covalently linked to cis-retinal. The protein is Rhodopsin, G0-coupled (SCOP2) of Mizuhopecten yessoensis (Japanese scallop).